The primary structure comprises 292 residues: MKDIATPNRTKDIVEKYGFSFKKSLGQNFLIDTNVLNRIVDHAEIGSESGAIEIGPGIGALTEQLAKRAKKVVAFEIDQRLLPILDETLAPYGNVTVINKDVLKADVHEVFNEQFEEGQDVMVVANLPYYITTPILFKLLEEKLPVRGFVVMMQKEVGDRLAAKPGTKEYGSLSIAIQYYTEVETVMTVPRTVFVPQPNVDSAIIRLLKRPKPVVEVTDETFFFEVVRASFAQRRKTLMNNLSNNLNGFPKDKELLDRILTEVGIDPKRRGETLSIEEFATLSNALVLHKLS.

S-adenosyl-L-methionine is bound by residues N28, L30, G55, E76, D101, and N126.

This sequence belongs to the class I-like SAM-binding methyltransferase superfamily. rRNA adenine N(6)-methyltransferase family. RsmA subfamily.

It localises to the cytoplasm. The catalysed reaction is adenosine(1518)/adenosine(1519) in 16S rRNA + 4 S-adenosyl-L-methionine = N(6)-dimethyladenosine(1518)/N(6)-dimethyladenosine(1519) in 16S rRNA + 4 S-adenosyl-L-homocysteine + 4 H(+). Its function is as follows. Specifically dimethylates two adjacent adenosines (A1518 and A1519) in the loop of a conserved hairpin near the 3'-end of 16S rRNA in the 30S particle. May play a critical role in biogenesis of 30S subunits. The polypeptide is Ribosomal RNA small subunit methyltransferase A (Bacillus cereus (strain G9842)).